Reading from the N-terminus, the 1024-residue chain is Nardilysin-like (1024 aa).

A disordered region spans residues 41–103; sequence PDIYPEGSVP…DEVKGKGDHQ (63 aa). Over residues 52-95 the composition is skewed to acidic residues; it reads QIDEDDEDGEEEDSDGSSEDDDDDEDDEEDGEGDEEDEDEDEDE. H129 is a Zn(2+) binding site. Catalysis depends on E132, which acts as the Proton acceptor. Position 133 (H133) interacts with Zn(2+). The active site involves E203. E210 lines the Zn(2+) pocket.

Belongs to the peptidase M16 family. Requires Zn(2+) as cofactor.

The catalysed reaction is Hydrolysis of polypeptides, preferably at -Xaa-|-Arg-Lys-, and less commonly at -Arg-|-Arg-Xaa-, in which Xaa is not Arg or Lys.. Its function is as follows. Cleaves peptide substrates on the N-terminus of arginine residues in dibasic pairs. The chain is Nardilysin-like from Arabidopsis thaliana (Mouse-ear cress).